The primary structure comprises 427 residues: Glutamate-1-semialdehyde 2,1-aminomutase (427 aa).

Lys-267 is subject to N6-(pyridoxal phosphate)lysine.

Belongs to the class-III pyridoxal-phosphate-dependent aminotransferase family. HemL subfamily. Homodimer. Pyridoxal 5'-phosphate is required as a cofactor.

It is found in the cytoplasm. The enzyme catalyses (S)-4-amino-5-oxopentanoate = 5-aminolevulinate. Its pathway is porphyrin-containing compound metabolism; protoporphyrin-IX biosynthesis; 5-aminolevulinate from L-glutamyl-tRNA(Glu): step 2/2. In Geobacter sulfurreducens (strain ATCC 51573 / DSM 12127 / PCA), this protein is Glutamate-1-semialdehyde 2,1-aminomutase.